Reading from the N-terminus, the 114-residue chain is DNA-directed RNA polymerases II, IV and V subunit 9B (114 aa).

Zn(2+) is bound by residues Cys7, Cys10, Cys29, Cys32, Cys76, Cys79, Cys103, and Cys108. A TFIIS-type zinc finger spans residues 72 to 113; that stretch reads KAVRCAKCQHGEAVFFQATARGEEGMTLFFVCCNPNCSHRWR.

Belongs to the archaeal RpoM/eukaryotic RPA12/RPB9/RPC11 RNA polymerase family. Component of the RNA polymerase II, IV and V complexes. Interacts with NRPD1.

The protein resides in the nucleus. It is found in the nucleolus. In terms of biological role, DNA-dependent RNA polymerase catalyzes the transcription of DNA into RNA using the four ribonucleoside triphosphates as substrates. Component of RNA polymerase II which synthesizes mRNA precursors and many functional non-coding RNAs. Pol II is the central component of the basal RNA polymerase II transcription machinery. It is composed of mobile elements that move relative to each other. Component of RNA polymerases IV and V which mediate short-interfering RNAs (siRNA) accumulation and subsequent RNA-directed DNA methylation-dependent (RdDM) transcriptional gene silencing (TGS) of endogenous repeated sequences, including transposable elements. Required for RNA silencing. The protein is DNA-directed RNA polymerases II, IV and V subunit 9B (NRPB9B) of Arabidopsis thaliana (Mouse-ear cress).